The sequence spans 216 residues: Ribose-5-phosphate isomerase A (216 aa).

Residues 26 to 29 (TGST), 79 to 82 (DGAD), and 92 to 95 (KGGG) each bind substrate. E101 acts as the Proton acceptor in catalysis. Residue K119 participates in substrate binding.

This sequence belongs to the ribose 5-phosphate isomerase family. In terms of assembly, homodimer.

The enzyme catalyses aldehydo-D-ribose 5-phosphate = D-ribulose 5-phosphate. It functions in the pathway carbohydrate degradation; pentose phosphate pathway; D-ribose 5-phosphate from D-ribulose 5-phosphate (non-oxidative stage): step 1/1. Its function is as follows. Catalyzes the reversible conversion of ribose-5-phosphate to ribulose 5-phosphate. The polypeptide is Ribose-5-phosphate isomerase A (Legionella pneumophila (strain Lens)).